The chain runs to 199 residues: Thymidine kinase (199 aa).

ATP is bound by residues 15–22 and 88–91; these read GSMFSGKS and DEVQ. Glutamate 89 serves as the catalytic Proton acceptor. The Zn(2+) site is built by cysteine 145, cysteine 148, cysteine 183, and histidine 186.

Belongs to the thymidine kinase family. Homotetramer.

It is found in the cytoplasm. It catalyses the reaction thymidine + ATP = dTMP + ADP + H(+). This Staphylococcus epidermidis (strain ATCC 12228 / FDA PCI 1200) protein is Thymidine kinase.